A 101-amino-acid polypeptide reads, in one-letter code: Urease subunit beta (101 aa).

It belongs to the urease beta subunit family. As to quaternary structure, heterotrimer of UreA (gamma), UreB (beta) and UreC (alpha) subunits. Three heterotrimers associate to form the active enzyme.

It is found in the cytoplasm. It carries out the reaction urea + 2 H2O + H(+) = hydrogencarbonate + 2 NH4(+). It functions in the pathway nitrogen metabolism; urea degradation; CO(2) and NH(3) from urea (urease route): step 1/1. The polypeptide is Urease subunit beta (Verminephrobacter eiseniae (strain EF01-2)).